We begin with the raw amino-acid sequence, 61 residues long: MAKKSLIAKAKREQKYSVRTYNRCSICGRPRAYYRKFGMCRICLRKLSSKGEIPGVIKSSW.

Zn(2+)-binding residues include Cys24, Cys27, Cys40, and Cys43.

It belongs to the universal ribosomal protein uS14 family. Zinc-binding uS14 subfamily. In terms of assembly, part of the 30S ribosomal subunit. Contacts proteins S3 and S10. Zn(2+) is required as a cofactor.

Binds 16S rRNA, required for the assembly of 30S particles and may also be responsible for determining the conformation of the 16S rRNA at the A site. The protein is Small ribosomal subunit protein uS14 of Syntrophus aciditrophicus (strain SB).